Here is a 311-residue protein sequence, read N- to C-terminus: Protease HtpX homolog 1 (311 aa).

Helical transmembrane passes span 12–32 and 35–55; these read VISL…IASL and ISLF…WIIS. His-137 provides a ligand contact to Zn(2+). Glu-138 is an active-site residue. Residue His-141 coordinates Zn(2+). 2 consecutive transmembrane segments (helical) span residues 159–179 and 184–204; these read VLGY…FLAA and LLFA…TFIL. Glu-216 lines the Zn(2+) pocket.

The protein belongs to the peptidase M48B family. Requires Zn(2+) as cofactor.

The protein localises to the cell membrane. The protein is Protease HtpX homolog 1 of Saccharolobus solfataricus (strain ATCC 35092 / DSM 1617 / JCM 11322 / P2) (Sulfolobus solfataricus).